The chain runs to 492 residues: Aspartyl/glutamyl-tRNA(Asn/Gln) amidotransferase subunit B (492 aa).

Belongs to the GatB/GatE family. GatB subfamily. As to quaternary structure, heterotrimer of A, B and C subunits.

The catalysed reaction is L-glutamyl-tRNA(Gln) + L-glutamine + ATP + H2O = L-glutaminyl-tRNA(Gln) + L-glutamate + ADP + phosphate + H(+). It catalyses the reaction L-aspartyl-tRNA(Asn) + L-glutamine + ATP + H2O = L-asparaginyl-tRNA(Asn) + L-glutamate + ADP + phosphate + 2 H(+). Functionally, allows the formation of correctly charged Asn-tRNA(Asn) or Gln-tRNA(Gln) through the transamidation of misacylated Asp-tRNA(Asn) or Glu-tRNA(Gln) in organisms which lack either or both of asparaginyl-tRNA or glutaminyl-tRNA synthetases. The reaction takes place in the presence of glutamine and ATP through an activated phospho-Asp-tRNA(Asn) or phospho-Glu-tRNA(Gln). In Bradyrhizobium sp. (strain BTAi1 / ATCC BAA-1182), this protein is Aspartyl/glutamyl-tRNA(Asn/Gln) amidotransferase subunit B.